A 1242-amino-acid chain; its full sequence is DNA excision repair protein ERCC-6-like (1242 aa).

Serine 14 carries the post-translational modification Phosphoserine. A TPR 1 repeat occupies 21–54; that stretch reads YLRYVKEAKEATKNGDLEQALKLFNLAKDIFPNE. Residues 109–277 enclose the Helicase ATP-binding domain; sequence SLYRDGRRGG…WSLFDFACQG (169 aa). 122 to 129 lines the ATP pocket; sequence DDMGLGKT. Residues 228-231 carry the DEAH box motif; that stretch reads DEAH. Residues 466 to 626 enclose the Helicase C-terminal domain; sequence FLMDLLKKLR…PFRYFSKQEL (161 aa). 2 positions are modified to phosphoserine: serine 755 and serine 773. Threonine 815 carries the phosphothreonine modification. Phosphoserine is present on residues serine 963, serine 989, serine 998, and serine 1021. Position 1055 is a phosphothreonine (threonine 1055). Serine 1061, serine 1090, and serine 1110 each carry phosphoserine. The disordered stretch occupies residues 1103–1181; it reads EERLDNSSEA…LSDGQLVDSP (79 aa). Composition is skewed to basic and acidic residues over residues 1105-1121 and 1130-1140; these read RLDNSSEAKVVEDHLEE and APEHTKEDPSR. Polar residues predominate over residues 1141 to 1156; it reads ETLSSENKSSQLSTSK. Serine 1173 and serine 1180 each carry phosphoserine. The stretch at 1192–1225 is one TPR 2 repeat; it reads YDTLVLHGKELKECGKIQEALDCLVKALDIKSSD.

Belongs to the SNF2/RAD54 helicase family. As to quaternary structure, interacts with PLK1, which phosphorylates it. Both proteins are mutually dependent on each other for correct subcellular localization. Interacts (via N-terminal TPR repeat) with BEND3 (via BEN domains 1 and 3); the interaction is direct. In terms of processing, phosphorylation by PLK1 prevents the association with chromosome arms and restricts its localization to the kinetochore-centromere region.

Its subcellular location is the chromosome. It localises to the centromere. The protein resides in the kinetochore. The catalysed reaction is ATP + H2O = ADP + phosphate + H(+). DNA helicase that acts as a tension sensor that associates with catenated DNA which is stretched under tension until it is resolved during anaphase. Functions as ATP-dependent DNA translocase. Can promote Holliday junction branch migration (in vitro). In Bos taurus (Bovine), this protein is DNA excision repair protein ERCC-6-like (ERCC6L).